Reading from the N-terminus, the 334-residue chain is MASTKGKLIHEMVPSKERDPPHSKVTIVGVGQVGMAAAISVLLRDLADELALVDVVEDRLKGEMMDLLHGSLFLKTAKIVADKDYSVTAGSRLVVVTAGARQQEGESRLNLVQRNVNIFKFIIPNIVKYSPNCILLVVSNPVDILTYVAWKLSGLPKHRVIGSGCNLDSARFRYLMSERLGVNSASCHGWIIGEHGDSSVPVWSGVNVAGVGLQSLNPDIGTPKDGEDWKSVHKQVVDSAYEVIKLKGYTSWAIGLSVADLAETILKNLRRVHPVSTHCKGQHGVHDDVFLSLPCVLGSEGITDIINQTLKKEEEAQVQKSAETLWNVQKELTF.

A disordered region spans residues M1–H22. Residues L8–H22 are compositionally biased toward basic and acidic residues. Residues G31–R59 and R101 contribute to the NAD(+) site. Substrate is bound by residues R108, N140, and R171. Residue N140 participates in NAD(+) binding. The active-site Proton acceptor is H195. Position 250 (T250) interacts with substrate.

The protein belongs to the LDH/MDH superfamily. LDH family. Homotetramer.

It localises to the cytoplasm. The enzyme catalyses (S)-lactate + NAD(+) = pyruvate + NADH + H(+). It functions in the pathway fermentation; pyruvate fermentation to lactate; (S)-lactate from pyruvate: step 1/1. This is L-lactate dehydrogenase from Petromyzon marinus (Sea lamprey).